The primary structure comprises 361 residues: Mitogen-activated protein kinase 14A (361 aa).

The Protein kinase domain occupies 25–309 (YQNLSPVGSG…AAEALAHPYF (285 aa)). Residues 31 to 39 (VGSGAYGTV) and Lys54 contribute to the ATP site. Residue Asp151 is the Proton acceptor of the active site. Thr181 is subject to Phosphothreonine; by MAP2K6. The TXY signature appears at 181 to 183 (TGY). Tyr183 carries the phosphotyrosine; by MAP2K6 modification.

This sequence belongs to the protein kinase superfamily. CMGC Ser/Thr protein kinase family. MAP kinase subfamily. Requires Mg(2+) as cofactor. Post-translationally, dually phosphorylated on Thr-181 and Tyr-183, which activates the enzyme. As to expression, exclusively expressed in the ovary.

The protein localises to the cytoplasm. The protein resides in the nucleus. The catalysed reaction is L-seryl-[protein] + ATP = O-phospho-L-seryl-[protein] + ADP + H(+). The enzyme catalyses L-threonyl-[protein] + ATP = O-phospho-L-threonyl-[protein] + ADP + H(+). Activated by threonine and tyrosine phosphorylation by the dual specificity kinase, MKK6. Functionally, serine/threonine kinase which acts as an essential component of the MAP kinase signal transduction pathway. Mapk14a is one of the four p38 MAPKs which play an important role in the cascades of cellular responses evoked by extracellular stimuli such as pro-inflammatory cytokines or physical stress leading to direct activation of transcription factors. Accordingly, p38 MAPKs phosphorylate a broad range of proteins and it has been estimated that they may have approximately 200 to 300 substrates each. Some of the targets are downstream kinases which are activated through phosphorylation and further phosphorylate additional targets. In Cyprinus carpio (Common carp), this protein is Mitogen-activated protein kinase 14A (mapk14a).